A 91-amino-acid polypeptide reads, in one-letter code: Small ribosomal subunit protein bS16 (91 aa).

The protein belongs to the bacterial ribosomal protein bS16 family.

The sequence is that of Small ribosomal subunit protein bS16 from Limosilactobacillus fermentum (strain NBRC 3956 / LMG 18251) (Lactobacillus fermentum).